A 485-amino-acid polypeptide reads, in one-letter code: NADH-quinone oxidoreductase subunit N (485 aa).

14 helical membrane passes run Leu-8 to Ile-28, Phe-35 to Val-55, Gly-71 to Ala-91, Phe-105 to Leu-125, Ser-127 to Phe-147, Tyr-159 to Ala-179, Leu-203 to Phe-223, Pro-235 to Met-255, Val-271 to Gln-291, Leu-297 to Gln-317, Val-326 to Leu-346, Ala-373 to Ile-393, Trp-408 to Val-430, and Ile-455 to Ile-475.

The protein belongs to the complex I subunit 2 family. As to quaternary structure, NDH-1 is composed of 13 different subunits. Subunits NuoA, H, J, K, L, M, N constitute the membrane sector of the complex.

Its subcellular location is the cell inner membrane. The catalysed reaction is a quinone + NADH + 5 H(+)(in) = a quinol + NAD(+) + 4 H(+)(out). NDH-1 shuttles electrons from NADH, via FMN and iron-sulfur (Fe-S) centers, to quinones in the respiratory chain. The immediate electron acceptor for the enzyme in this species is believed to be ubiquinone. Couples the redox reaction to proton translocation (for every two electrons transferred, four hydrogen ions are translocated across the cytoplasmic membrane), and thus conserves the redox energy in a proton gradient. This chain is NADH-quinone oxidoreductase subunit N, found in Shigella dysenteriae serotype 1 (strain Sd197).